The primary structure comprises 518 residues: Forkhead box protein H1 (518 aa).

Residues 72 to 113 form a disordered region; the sequence is GSMYGLSPGTHEGSCTHTHEGPKDSMAGDQTRSRKSKKKNYH. Residues 104-113 are compositionally biased toward basic residues; sequence SRKSKKKNYH. Residues 117 to 213 constitute a DNA-binding region (fork-head); it reads KPPYSYLAMI…MKLQNTALTR (97 aa). Positions 318–397 are disordered; sequence KPTRNARSPG…NYSPIEPPKK (80 aa). Residues 329–346 are compositionally biased toward low complexity; that stretch reads STIHSTYSSSSSSISTIS. Positions 380-506 are SMAD-interaction domain (SID); it reads TSSDPDTGNY…PSFLSQCLGS (127 aa). The short motif at 405 to 409 is the Fast/FoxH1 motif 1 (FM1) element; that stretch reads LPTSY. Positions 415–421 match the Fast/FoxH1 motif 2 (FM2) motif; that stretch reads PNVVAPP. Positions 470–491 match the SMAD interaction motif (SIM) motif; it reads LDNMLRAMPPNKSVFDVLTSHP.

ARF1 contains 2 smad2s, 1 smad4 and 1 foxh1/fast-1 protein. Interaction with smad4 is most likely indirect through interaction with the MH2 domain of smad2. Binds to the MH2 domain of smad3, which can incorporate into the ARF1 complex. The ARF1 and ARF2 complexes are activated by distinct TGF-beta family members; formation of ARF1 is promoted by activin. Interacts (via Fork-head domain) with gtf2ird1/wbscr11 (via repeats 4-5). In terms of tissue distribution, highly expressed in the animal cap (prospective ectoderm) and prospective mesoderm of stage 10.25 embryos.

It localises to the nucleus. Its function is as follows. Transcriptional activator. Recognizes and binds to the DNA sequence 5'-TGT[GT][GT]ATT-3'. Upon TGF-beta induction, forms a transcriptionally active complex with smad2 and smad4 called activin-responsive factor 1 (ARF1), which binds a site on the mix-B/mix.2 promoter called the activin response element (ARE). Binds to activated smads and the ARE with much lower affinity than fast3. Necessary for the first steps in mesoderm specification, directly inducing mesodermal genes. Acts with fast3 to control the convergent extension movements of gastrulation. Binds to the proximal element (PE) of the gsc gene and cooperates with gtf2ird1/wbscr11 and SMAD proteins to regulate gsc transcription. The chain is Forkhead box protein H1 (foxh1) from Xenopus laevis (African clawed frog).